Reading from the N-terminus, the 295-residue chain is MKIAILSRNSKLYSTRRLIEAGRKRGHTVRILDPLRCYMRIAADGFSLHYKGKPITGFDAVIPRIGASVTRYATAVLRQLEFMGTYTPNPSDAILRSRDKLRAHQLLAAQGIDMPVTVFGDNPDDTQDLLSMLGPPPHVVKLNEGAQGAGVILTEKASASRGVVEALRGLYANFIVQEFIGEAEGADLRCFVVGDKVVAAMRRQAAEGDFRSNLHLGGTAAVTEATEQEQEVAVRSARALGLTVAGVDLIRSKRGPLVLEVNSTPGLEGVEGVCGVDVAAAIVQHLEQSVRRSAG.

The 184-residue stretch at 104 to 287 (HQLLAAQGID…VAAAIVQHLE (184 aa)) folds into the ATP-grasp domain. ATP is bound by residues K141, 178–179 (EF), D187, and 211–213 (RSN). Positions 248, 260, and 262 each coordinate Mg(2+). Mn(2+) contacts are provided by D248, E260, and N262.

This sequence belongs to the RimK family. Requires Mg(2+) as cofactor. Mn(2+) serves as cofactor.

The protein is Probable alpha-L-glutamate ligase of Xanthomonas euvesicatoria pv. vesicatoria (strain 85-10) (Xanthomonas campestris pv. vesicatoria).